Reading from the N-terminus, the 3414-residue chain is Genome polyprotein (3414 aa).

The segment at 1–30 (MVKKAILKGKGGGPPRRVSKETATKTRQPR) is disordered. The Cytoplasmic segment spans residues 2–98 (VKKAILKGKG…LQKRGKRRSA (97 aa)). Positions 97–117 (SATDWMSWLLVITLLGMTLAA) are cleaved as a propeptide — ER anchor for the capsid protein C, removed in mature form by serine protease NS3. Residues 99–119 (TDWMSWLLVITLLGMTLAATV) form a helical membrane-spanning segment. The Extracellular portion of the chain corresponds to 120 to 242 (RKERDGSTVI…HLTRVEGWVW (123 aa)). A glycan (N-linked (GlcNAc...) asparagine; by host) is linked at Asn-144. Residues 243–260 (KNKLLALAMVTVVWLTLE) form a helical membrane-spanning segment. Position 261 (Ser-261) is a topological domain, cytoplasmic. A helical transmembrane segment spans residues 262 to 280 (VVTRVAVLVVLLCLAPVYA). Over 281–727 (SRCTHLENRD…HTVLGGAFNS (447 aa)) the chain is Extracellular. 6 disulfide bridges follow: Cys-283–Cys-310, Cys-340–Cys-396, Cys-340–Cys-401, Cys-354–Cys-385, Cys-372–Cys-396, and Cys-372–Cys-401. A fusion peptide region spans residues 378–391 (DRGWGNHCGLFGKG). Asn-434 carries an N-linked (GlcNAc...) asparagine; by host glycan. 2 cysteine pairs are disulfide-bonded: Cys-466–Cys-570 and Cys-587–Cys-618. A helical membrane pass occupies residues 728–748 (IFGGVGFLPKLLLGVALAWLG). The Extracellular segment spans residues 749–755 (LNMRNPT). Residues 756–776 (MSMSFLLAGGLVLAMTLGVGA) traverse the membrane as a helical segment. Residues 777–1132 (DVGCAVDTER…RSMVVADNGE (356 aa)) are Extracellular-facing. Disulfide bonds link Cys-780/Cys-791, Cys-831/Cys-920, Cys-955/Cys-1000, Cys-1057/Cys-1106, Cys-1068/Cys-1090, and Cys-1089/Cys-1093. Asn-861, Asn-983, and Asn-999 each carry an N-linked (GlcNAc...) asparagine; by host glycan. Residues 1133-1153 (LLSEGGVPGIVALFVVLEYII) form a helical membrane-spanning segment. Over 1154 to 1158 (RRRPS) the chain is Cytoplasmic. A helical membrane pass occupies residues 1159–1179 (TGTTVVWGGIVVLALLVTGMV). The Lumenal portion of the chain corresponds to 1180–1187 (RIESLVRY). The chain crosses the membrane as a helical span at residues 1188–1208 (VVAVGITFHLELGPEIVALML). Residues 1209-1293 (LQAVFELRVG…LLMALMTQQD (85 aa)) are Cytoplasmic-facing. A helical membrane pass occupies residues 1294-1314 (VVTVHHGLVCFLSVASACSVW). The Lumenal portion of the chain corresponds to 1315–1327 (RLLKGHREQKGLT). Residues 1328 to 1348 (WVVPLAGLLGGEGSGIRLLAF) form a helical membrane-spanning segment. At 1349–1359 (WELSAHRGRRS) the chain is on the cytoplasmic side. A helical transmembrane segment spans residues 1360-1378 (FSEPLTVVGVMLTLASGMM). Topologically, residues 1379–1382 (RHTS) are lumenal. Residues 1383–1403 (QEALCALAVASFLLLMLVLGT) traverse the membrane as a helical segment. Topologically, residues 1404–1454 (RKMQLVAEWSGCVEWYPELVNEGGEVSLRVRQDAMGNFHLTELEKEERMMA) are cytoplasmic. The tract at residues 1410–1449 (AEWSGCVEWYPELVNEGGEVSLRVRQDAMGNFHLTELEKE) is interacts with and activates NS3 protease. An intramembrane region (helical) is located at residues 1455–1475 (FWLIAGLAASAIHWSGILGVM). The Cytoplasmic portion of the chain corresponds to 1476 to 2160 (GLWTLTEMLR…RMAERDAPEA (685 aa)). The Peptidase S7 domain maps to 1490-1669 (SDLVFSGQGG…EAEKSRPNLP (180 aa)). Residues His-1543, Asp-1567, and Ser-1627 each act as charge relay system; for serine protease NS3 activity in the active site. The 157-residue stretch at 1675–1831 (TGWTSKGQIT…ESNGAITSEE (157 aa)) folds into the Helicase ATP-binding domain. 1688–1695 (MHPGSGKT) lines the ATP pocket. Residues 1779 to 1782 (DEAH) carry the DEAH box motif. The Helicase C-terminal domain occupies 1841–2000 (DGFDWITEYE…TLRGPVATFY (160 aa)). At Lys-1883 the chain carries N6-acetyllysine; by host. A helical membrane pass occupies residues 2161–2181 (FLTMVEMMVLGLATLGVIWCF). The Lumenal segment spans residues 2182–2189 (VVRTSISR). Residues 2190–2210 (MMLGTLVLLASLLLLWAGGVG) constitute an intramembrane region (helical). Residue Tyr-2211 is a topological domain, lumenal. A helical transmembrane segment spans residues 2212 to 2232 (GNMAGVALIFYTLLTVLQPEA). Over 2233–2244 (GKQRSSDDNKLA) the chain is Cytoplasmic. The helical transmembrane segment at 2245 to 2265 (YFLLTLCSLAGLVAANEMGFL) threads the bilayer. At 2266 to 2299 (EKTKADLSTALWSEREEPRPWSEWTNVDIQPARS) the chain is on the lumenal side. Residues 2300-2320 (WGTYVLVVSLFTPYIIHQLQT) constitute an intramembrane region (helical). At 2321–2343 (KIQQLVNSAVASGAQAMRDLGGG) the chain is on the lumenal side. The helical intramembrane region spans 2344–2364 (APFFGVAGHVMTLGVVSLIGA). Over 2365–2368 (TPTS) the chain is Lumenal. Residues 2369-2389 (LMVGVGLAALHLAIVVSGLEA) traverse the membrane as a helical segment. At 2390–2432 (ELTQRAHKVFFSAMVRNPMVDGDVINPFGEGEAKPALYERKMS) the chain is on the cytoplasmic side. Residues 2433–2453 (LVLATVLCLMSVVMNRTVASI) traverse the membrane as a helical segment. Over 2454–2477 (TEASAVGLAAAGQLLRPEADTLWT) the chain is Lumenal. The helical transmembrane segment at 2478–2498 (MPVACGMSGVVRGSLWGFLPL) threads the bilayer. Over 2499-3414 (GHRLWLRASG…WELRLESSII (916 aa)) the chain is Cytoplasmic. One can recognise an mRNA cap 0-1 NS5-type MT domain in the interval 2512–2776 (GGSEGDTLGD…ELDLGVGTRC (265 aa)). Ser-2567 provides a ligand contact to S-adenosyl-L-methionine. Position 2567 is a phosphoserine (Ser-2567). Lys-2572 functions as the For 2'-O-MTase activity in the catalytic mechanism. The S-adenosyl-L-methionine site is built by Gly-2597, Trp-2598, Thr-2615, Ile-2616, Asp-2642, and Val-2643. The active-site For 2'-O-MTase activity is the Asp-2657. Residue Ile-2658 participates in S-adenosyl-L-methionine binding. Residues Lys-2694 and Glu-2730 each act as for 2'-O-MTase activity in the active site. Residues 2730 to 2734 (EMYYS) are interaction with host SCRIB. Tyr-2732 is an S-adenosyl-L-methionine binding site. Positions 2950, 2954, 2959, and 2962 each coordinate Zn(2+). Positions 3040–3189 (GLFYADDTAG…RPLDDRFGKA (150 aa)) constitute a RdRp catalytic domain. The Zn(2+) site is built by His-3224, Cys-3240, and Cys-3359.

This sequence in the N-terminal section; belongs to the class I-like SAM-binding methyltransferase superfamily. mRNA cap 0-1 NS5-type methyltransferase family. In terms of assembly, homodimer. Interacts (via N-terminus) with host EXOC1 (via C-terminus); this interaction results in EXOC1 degradation through the proteasome degradation pathway. Forms heterodimers with envelope protein E in the endoplasmic reticulum and Golgi. As to quaternary structure, homodimer; in the endoplasmic reticulum and Golgi. Interacts with protein prM. Interacts with non-structural protein 1. In terms of assembly, homodimer; Homohexamer when secreted. Interacts with envelope protein E. Interacts (via N-terminus) with serine protease NS3. As to quaternary structure, forms a heterodimer with serine protease NS3. May form homooligomers. In terms of assembly, forms a heterodimer with NS2B. Interacts with NS4B. Interacts with unphosphorylated RNA-directed RNA polymerase NS5; this interaction stimulates RNA-directed RNA polymerase NS5 guanylyltransferase activity. Interacts with serine protease NS3. Interacts with NS1. As to quaternary structure, homodimer. Interacts with host STAT2; this interaction inhibits the phosphorylation of the latter, and, when all viral proteins are present (polyprotein), targets STAT2 for degradation. Interacts with serine protease NS3. Interacts with host SCRIB; this interaction targets NS5 to the cell membrane periphery and nucleus, thereby allowing efficient host nuclear STAT1 inhibition. Specific enzymatic cleavages in vivo yield mature proteins. Cleavages in the lumen of endoplasmic reticulum are performed by host signal peptidase, whereas cleavages in the cytoplasmic side are performed by serine protease NS3. Signal cleavage at the 2K-4B site requires a prior NS3 protease-mediated cleavage at the 4A-2K site. Post-translationally, cleaved in post-Golgi vesicles by a host furin, releasing the mature small envelope protein M, and peptide pr. This cleavage is incomplete as up to 30% of viral particles still carry uncleaved prM. In terms of processing, N-glycosylated. N-glycosylated. The excreted form is glycosylated and this is required for efficient secretion of the protein from infected cells. Post-translationally, acetylated by host KAT5. Acetylation modulates NS3 RNA-binding and unwinding activities and plays an important positive role for viral replication. In terms of processing, phosphorylated on serines residues. This phosphorylation may trigger NS5 nuclear localization.

The protein localises to the virion. It is found in the host nucleus. It localises to the host cytoplasm. The protein resides in the host perinuclear region. Its subcellular location is the secreted. The protein localises to the virion membrane. It is found in the host endoplasmic reticulum membrane. It catalyses the reaction Selective hydrolysis of -Xaa-Xaa-|-Yaa- bonds in which each of the Xaa can be either Arg or Lys and Yaa can be either Ser or Ala.. It carries out the reaction RNA(n) + a ribonucleoside 5'-triphosphate = RNA(n+1) + diphosphate. The enzyme catalyses a ribonucleoside 5'-triphosphate + H2O = a ribonucleoside 5'-diphosphate + phosphate + H(+). The catalysed reaction is ATP + H2O = ADP + phosphate + H(+). It catalyses the reaction a 5'-end (5'-triphosphoguanosine)-ribonucleoside in mRNA + S-adenosyl-L-methionine = a 5'-end (N(7)-methyl 5'-triphosphoguanosine)-ribonucleoside in mRNA + S-adenosyl-L-homocysteine. It carries out the reaction a 5'-end (N(7)-methyl 5'-triphosphoguanosine)-ribonucleoside in mRNA + S-adenosyl-L-methionine = a 5'-end (N(7)-methyl 5'-triphosphoguanosine)-(2'-O-methyl-ribonucleoside) in mRNA + S-adenosyl-L-homocysteine + H(+). Functionally, plays a role in virus budding by binding to the cell membrane and gathering the viral RNA into a nucleocapsid that forms the core of a mature virus particle. During virus entry, may induce genome penetration into the host cytoplasm after hemifusion induced by the surface proteins. Can migrate to the cell nucleus where it modulates host functions. Its function is as follows. Inhibits RNA silencing by interfering with host Dicer. In terms of biological role, prevents premature fusion activity of envelope proteins in trans-Golgi by binding to envelope protein E at pH6.0. After virion release in extracellular space, gets dissociated from E dimers. Acts as a chaperone for envelope protein E during intracellular virion assembly by masking and inactivating envelope protein E fusion peptide. prM is the only viral peptide matured by host furin in the trans-Golgi network probably to avoid catastrophic activation of the viral fusion activity in acidic Golgi compartment prior to virion release. prM-E cleavage is inefficient, and many virions are only partially matured. These uncleaved prM would play a role in immune evasion. Functionally, may play a role in virus budding. Exerts cytotoxic effects by activating a mitochondrial apoptotic pathway through M ectodomain. May display a viroporin activity. Its function is as follows. Binds to host cell surface receptor and mediates fusion between viral and cellular membranes. Envelope protein is synthesized in the endoplasmic reticulum in the form of heterodimer with protein prM. They play a role in virion budding in the ER, and the newly formed immature particle is covered with 60 spikes composed of heterodimer between precursor prM and envelope protein E. The virion is transported to the Golgi apparatus where the low pH causes dissociation of PrM-E heterodimers and formation of E homodimers. prM-E cleavage is inefficient, and many virions are only partially matured. These uncleaved prM would play a role in immune evasion. In terms of biological role, involved in immune evasion, pathogenesis and viral replication. Once cleaved off the polyprotein, is targeted to three destinations: the viral replication cycle, the plasma membrane and the extracellular compartment. Essential for viral replication. Required for formation of the replication complex and recruitment of other non-structural proteins to the ER-derived membrane structures. Excreted as a hexameric lipoparticle that plays a role against host immune response. Antagonizing the complement function. Binds to the host macrophages and dendritic cells. Inhibits signal transduction originating from Toll-like receptor 3 (TLR3). Component of the viral RNA replication complex that functions in virion assembly and antagonizes the host immune response. Functionally, required cofactor for the serine protease function of NS3. May have membrane-destabilizing activity and form viroporins. Its function is as follows. Displays three enzymatic activities: serine protease, NTPase and RNA helicase. NS3 serine protease, in association with NS2B, performs its autocleavage and cleaves the polyprotein at dibasic sites in the cytoplasm: C-prM, NS2A-NS2B, NS2B-NS3, NS3-NS4A, NS4A-2K and NS4B-NS5. NS3 RNA helicase binds RNA and unwinds dsRNA in the 3' to 5' direction. In terms of biological role, regulates the ATPase activity of the NS3 helicase activity. NS4A allows NS3 helicase to conserve energy during unwinding. Functions as a signal peptide for NS4B and is required for the interferon antagonism activity of the latter. Functionally, induces the formation of ER-derived membrane vesicles where the viral replication takes place. Inhibits interferon (IFN)-induced host STAT1 phosphorylation and nuclear translocation, thereby preventing the establishment of cellular antiviral state by blocking the IFN-alpha/beta pathway. Inhibits STAT2 translocation in the nucleus after IFN-alpha treatment. Its function is as follows. Replicates the viral (+) and (-) genome, and performs the capping of genomes in the cytoplasm. NS5 methylates viral RNA cap at guanine N-7 and ribose 2'-O positions. Besides its role in RNA genome replication, also prevents the establishment of cellular antiviral state by blocking the interferon-alpha/beta (IFN-alpha/beta) signaling pathway. Inhibits host TYK2 and STAT2 phosphorylation, thereby preventing activation of JAK-STAT signaling pathway. The protein is Genome polyprotein of Tick-borne encephalitis virus European subtype (strain Neudoerfl) (NEUV).